We begin with the raw amino-acid sequence, 216 residues long: 3-isopropylmalate dehydratase small subunit (216 aa).

It belongs to the LeuD family. LeuD type 1 subfamily. As to quaternary structure, heterodimer of LeuC and LeuD.

The enzyme catalyses (2R,3S)-3-isopropylmalate = (2S)-2-isopropylmalate. It functions in the pathway amino-acid biosynthesis; L-leucine biosynthesis; L-leucine from 3-methyl-2-oxobutanoate: step 2/4. Catalyzes the isomerization between 2-isopropylmalate and 3-isopropylmalate, via the formation of 2-isopropylmaleate. This is 3-isopropylmalate dehydratase small subunit from Psychrobacter sp. (strain PRwf-1).